The following is a 496-amino-acid chain: Zinc finger protein PLAGL2 (496 aa).

6 consecutive C2H2-type zinc fingers follow at residues 68–92 (YSCPQLHCGKAFASKYKLYRHMATH), 98–120 (HQCMYCDKMFHRKDHLRNHLQTH), 127–149 (LHCSECGKNYNTKLGYRRHLAMH), 156–178 (LSCKVCLQTFESTQALLEHLKAH), 191–213 (HPCDHCDRRFYTRKDVRRHLVVH), and 219–242 (FLCQYCAQRFGRKDHLTRHVKKSH).

The protein belongs to the krueppel C2H2-type zinc-finger protein family.

The protein localises to the nucleus. In terms of biological role, shows weak transcriptional activatory activity. The protein is Zinc finger protein PLAGL2 (PLAGL2) of Homo sapiens (Human).